The chain runs to 802 residues: Epithelial sodium channel subunit delta (802 aa).

The Cytoplasmic portion of the chain corresponds to 1–250; it reads MRAVLSQKTT…CSRGNRLKTT (250 aa). A disordered region spans residues 145–211; that stretch reads KQPHGGALTS…PPPPKEGHQE (67 aa). A compositionally biased stretch (basic residues) spans 166–176; sequence CHLKGWQHRPT. Residues 192 to 205 are compositionally biased toward pro residues; that stretch reads PPRPGPPSAPPPPP. Residues 251–271 form a helical membrane-spanning segment; it reads SWGLLSLGALVALCWQLGLLF. The Extracellular segment spans residues 272–694; it reads ERHWHRPVLM…VPQLLSAMGS (423 aa). Asn330 and Asn548 each carry an N-linked (GlcNAc...) asparagine glycan. Residues 695 to 715 traverse the membrane as a helical segment; it reads LCSLWFGASVLSLLELLELLL. The Cytoplasmic portion of the chain corresponds to 716 to 802; that stretch reads DASALTLVLG…GPQPLETLDT (87 aa). A disordered region spans residues 738–777; the sequence is RASPASGASSIKPEASQMPPPAGGTSDDPEPSGPHLPRVM.

This sequence belongs to the amiloride-sensitive sodium channel (TC 1.A.6) family. SCNN1D subfamily. As to quaternary structure, can form an alternative heterotrimeric epithelial sodium channel (ENaC), composed of a delta (SCNN1D), beta (SCNN1B), and gamma (SCNN1G) subunit, where the delta (SCNN1D) subunit replaces the alpha (SCNN1A) subunit. In terms of tissue distribution, not specifically expressed in epithelial cells.

The protein localises to the apical cell membrane. It carries out the reaction Na(+)(in) = Na(+)(out). Originally identified and characterized by its inhibition by the diuretic drug amiloride. Potential alternative pore-forming subunit of the epithelial sodium channel (ENaC), capable of replacing the alpha/SCNN1A subunit, creating a more active channel with distinct properties. ENaC functions in epithelial tissues, where it facilitates the electrodiffusion of sodium ions from the extracellular fluid through the apical membrane of cells, with water following osmotically, regulating sodium balance and fluid homeostasis. This subunit could also function independently as a sodium channel or assemble into other tissue-specific heterotrimeric sodium channels. Its function is as follows. ENaC channels including this isoform exhibit greater conductance. The polypeptide is Epithelial sodium channel subunit delta (Homo sapiens (Human)).